A 183-amino-acid polypeptide reads, in one-letter code: Secreted RxLR effector protein 41 (183 aa).

The N-terminal stretch at methionine 1–serine 18 is a signal peptide. The short motif at arginine 41 to arginine 65 is the RxLR-dEER element. An N-linked (GlcNAc...) asparagine glycan is attached at asparagine 88.

The protein belongs to the RxLR effector family.

It localises to the secreted. The protein localises to the host nucleus. The protein resides in the host cytoplasm. Secreted effector that dos not suppress the host cell death induced by cell death-inducing proteins. This is Secreted RxLR effector protein 41 from Plasmopara viticola (Downy mildew of grapevine).